The sequence spans 472 residues: Uronate isomerase (472 aa).

This sequence belongs to the metallo-dependent hydrolases superfamily. Uronate isomerase family.

It carries out the reaction D-glucuronate = D-fructuronate. It catalyses the reaction aldehydo-D-galacturonate = keto-D-tagaturonate. The protein operates within carbohydrate metabolism; pentose and glucuronate interconversion. The sequence is that of Uronate isomerase from Halalkalibacterium halodurans (strain ATCC BAA-125 / DSM 18197 / FERM 7344 / JCM 9153 / C-125) (Bacillus halodurans).